A 416-amino-acid polypeptide reads, in one-letter code: Glutamyl-tRNA reductase (416 aa).

Residues 49-52 (TCNR), Ser105, 110-112 (EPQ), and Gln116 each bind substrate. The active-site Nucleophile is Cys50. 185 to 190 (GAGETI) is an NADP(+) binding site.

This sequence belongs to the glutamyl-tRNA reductase family. In terms of assembly, homodimer.

The enzyme catalyses (S)-4-amino-5-oxopentanoate + tRNA(Glu) + NADP(+) = L-glutamyl-tRNA(Glu) + NADPH + H(+). It participates in porphyrin-containing compound metabolism; protoporphyrin-IX biosynthesis; 5-aminolevulinate from L-glutamyl-tRNA(Glu): step 1/2. Catalyzes the NADPH-dependent reduction of glutamyl-tRNA(Glu) to glutamate 1-semialdehyde (GSA). This Shewanella loihica (strain ATCC BAA-1088 / PV-4) protein is Glutamyl-tRNA reductase.